The primary structure comprises 693 residues: DNA ligase (693 aa).

Residues 40–44, 89–90, and Glu121 each bind NAD(+); these read DSEYD and SL. Lys123 (N6-AMP-lysine intermediate) is an active-site residue. Arg144, Glu179, Lys295, and Lys319 together coordinate NAD(+). 4 residues coordinate Zn(2+): Cys413, Cys416, Cys431, and Cys437. The BRCT domain occupies 610–693; that stretch reads REQNILTGKI…AFIKCLEKEV (84 aa).

It belongs to the NAD-dependent DNA ligase family. LigA subfamily. Requires Mg(2+) as cofactor. It depends on Mn(2+) as a cofactor.

The catalysed reaction is NAD(+) + (deoxyribonucleotide)n-3'-hydroxyl + 5'-phospho-(deoxyribonucleotide)m = (deoxyribonucleotide)n+m + AMP + beta-nicotinamide D-nucleotide.. DNA ligase that catalyzes the formation of phosphodiester linkages between 5'-phosphoryl and 3'-hydroxyl groups in double-stranded DNA using NAD as a coenzyme and as the energy source for the reaction. It is essential for DNA replication and repair of damaged DNA. This Rickettsia typhi (strain ATCC VR-144 / Wilmington) protein is DNA ligase.